A 161-amino-acid polypeptide reads, in one-letter code: Endoribonuclease YbeY (161 aa).

Residues His121, His125, and His131 each coordinate Zn(2+).

The protein belongs to the endoribonuclease YbeY family. Zn(2+) is required as a cofactor.

It localises to the cytoplasm. Functionally, single strand-specific metallo-endoribonuclease involved in late-stage 70S ribosome quality control and in maturation of the 3' terminus of the 16S rRNA. This chain is Endoribonuclease YbeY, found in Xylella fastidiosa (strain M23).